The following is a 250-amino-acid chain: 3-deoxy-manno-octulosonate cytidylyltransferase (250 aa).

This sequence belongs to the KdsB family.

It is found in the cytoplasm. It carries out the reaction 3-deoxy-alpha-D-manno-oct-2-ulosonate + CTP = CMP-3-deoxy-beta-D-manno-octulosonate + diphosphate. It participates in nucleotide-sugar biosynthesis; CMP-3-deoxy-D-manno-octulosonate biosynthesis; CMP-3-deoxy-D-manno-octulosonate from 3-deoxy-D-manno-octulosonate and CTP: step 1/1. The protein operates within bacterial outer membrane biogenesis; lipopolysaccharide biosynthesis. In terms of biological role, activates KDO (a required 8-carbon sugar) for incorporation into bacterial lipopolysaccharide in Gram-negative bacteria. This is 3-deoxy-manno-octulosonate cytidylyltransferase from Yersinia enterocolitica serotype O:8 / biotype 1B (strain NCTC 13174 / 8081).